Reading from the N-terminus, the 132-residue chain is Fertilization-influencing membrane protein (132 aa).

The chain crosses the membrane as a helical span at residues 100-120; sequence PGLFHHILVGLLVVAFFFLLF.

As to expression, testis-specific.

It is found in the cell membrane. Its function is as follows. May play a role in sperm-oocyte fusion during fertilization. The sequence is that of Fertilization-influencing membrane protein from Homo sapiens (Human).